Reading from the N-terminus, the 267-residue chain is Regulatory protein VirG (267 aa).

The Response regulatory domain maps to 29–143 (HVLLVDDDVA…EFLARIRVAL (115 aa)). Asp78 carries the 4-aspartylphosphate modification. The ompR/PhoB-type DNA-binding region spans 155–255 (RRSFCFTDWT…ARGAGYFFDA (101 aa)).

In terms of processing, phosphorylated by wide host range (WHR) VirA protein.

It is found in the cytoplasm. VirG is required for the positive regulation of at least two vir loci encoded by the Ti plasmid of A.tumefaciens. The polypeptide is Regulatory protein VirG (virG) (Agrobacterium tumefaciens (strain 15955)).